The primary structure comprises 371 residues: Ligninase LG5 (371 aa).

The first 21 residues, 1 to 21 (MAFKKLLAVLTAALSLRAAQG), serve as a signal peptide directing secretion. Residues 22–27 (AAVEKR) constitute a propeptide that is removed on maturation. Cystine bridges form between Cys30–Cys42, Cys41–Cys311, Cys61–Cys146, and Cys275–Cys344. His74 acts as the Proton acceptor in catalysis. Asp75, Gly92, Asp94, and Ser96 together coordinate Ca(2+). His202 is a binding site for heme b. Ca(2+)-binding residues include Ser203, Asp220, Thr222, Ile225, and Asp227. Asn283 is a glycosylation site (N-linked (GlcNAc...) asparagine). The tract at residues 349–371 (FPTLSTLPGPATSVARIPPPPGA) is disordered.

Belongs to the peroxidase family. Ligninase subfamily. The cofactor is Ca(2+). It depends on heme b as a cofactor.

The enzyme catalyses 1-(3,4-dimethoxyphenyl)-2-(2-methoxyphenoxy)propane-1,3-diol + H2O2 = 3,4-dimethoxybenzaldehyde + guaiacol + glycolaldehyde + H2O. The catalysed reaction is 2 (3,4-dimethoxyphenyl)methanol + H2O2 = 2 (3,4-dimethoxyphenyl)methanol radical + 2 H2O. Its pathway is secondary metabolite metabolism; lignin degradation. Its function is as follows. Depolymerization of lignin. Catalyzes the C(alpha)-C(beta) cleavage of the propyl side chains of lignin. The protein is Ligninase LG5 (GLG5) of Phanerodontia chrysosporium (White-rot fungus).